Here is a 449-residue protein sequence, read N- to C-terminus: Glutamyl-tRNA reductase (449 aa).

Substrate-binding positions include 58–61 (TCNR), serine 121, 126–128 (ETQ), and glutamine 132. Cysteine 59 acts as the Nucleophile in catalysis. 203-208 (GLGEMA) lines the NADP(+) pocket.

This sequence belongs to the glutamyl-tRNA reductase family. As to quaternary structure, homodimer.

It catalyses the reaction (S)-4-amino-5-oxopentanoate + tRNA(Glu) + NADP(+) = L-glutamyl-tRNA(Glu) + NADPH + H(+). It functions in the pathway porphyrin-containing compound metabolism; protoporphyrin-IX biosynthesis; 5-aminolevulinate from L-glutamyl-tRNA(Glu): step 1/2. Catalyzes the NADPH-dependent reduction of glutamyl-tRNA(Glu) to glutamate 1-semialdehyde (GSA). The polypeptide is Glutamyl-tRNA reductase (Helicobacter pylori (strain ATCC 700392 / 26695) (Campylobacter pylori)).